A 248-amino-acid chain; its full sequence is Ribonuclease PH (248 aa).

Residues Arg-86 and 124–126 (GTR) contribute to the phosphate site.

This sequence belongs to the RNase PH family. In terms of assembly, homohexameric ring arranged as a trimer of dimers.

It catalyses the reaction tRNA(n+1) + phosphate = tRNA(n) + a ribonucleoside 5'-diphosphate. In terms of biological role, phosphorolytic 3'-5' exoribonuclease that plays an important role in tRNA 3'-end maturation. Removes nucleotide residues following the 3'-CCA terminus of tRNAs; can also add nucleotides to the ends of RNA molecules by using nucleoside diphosphates as substrates, but this may not be physiologically important. Probably plays a role in initiation of 16S rRNA degradation (leading to ribosome degradation) during starvation. This Clostridium perfringens (strain ATCC 13124 / DSM 756 / JCM 1290 / NCIMB 6125 / NCTC 8237 / Type A) protein is Ribonuclease PH.